Consider the following 579-residue polypeptide: Alpha-glucosidase (579 aa).

Asp-212 acts as the Nucleophile in catalysis. The Proton donor role is filled by Glu-269.

This sequence belongs to the glycosyl hydrolase 13 family.

The enzyme catalyses Hydrolysis of terminal, non-reducing (1-&gt;4)-linked alpha-D-glucose residues with release of alpha-D-glucose.. This Schizosaccharomyces pombe (strain 972 / ATCC 24843) (Fission yeast) protein is Alpha-glucosidase (mal1).